A 260-amino-acid chain; its full sequence is MAKLCAHQVSVVYASRRGALTALENVSMSVGGNEIVVALGASGCGKSTLLSLLAGFQPPTSGRVSVDGAPVTGPGADRGVVFQDDALMPWLNVIDNVAFGLRMQGVGRDARNARARDVLRLVKLAGFEQHRIDEISGGMRQRVGLARALAADPSFLLMDEPLGALDALTREHMQTLLLDVWRETGKGVFLITHSVEEAVLLATELLILSPRPGRIVARHSLDFARRYAAGESMRSIKSDPRFTEIHLALVEQLMRETEEV.

The ABC transporter domain occupies Ala-6–Ser-235. An ATP-binding site is contributed by Gly-40–Ser-47.

Belongs to the ABC transporter superfamily. Taurine importer (TC 3.A.1.17.1) family. As to quaternary structure, the complex is composed of two ATP-binding proteins (TauB), two transmembrane proteins (TauC) and a solute-binding protein (TauA).

It localises to the cell inner membrane. It carries out the reaction taurine(out) + ATP + H2O = taurine(in) + ADP + phosphate + H(+). In terms of biological role, part of the ABC transporter complex TauABC involved in taurine import. Responsible for energy coupling to the transport system. The protein is Taurine import ATP-binding protein TauB of Burkholderia thailandensis (strain ATCC 700388 / DSM 13276 / CCUG 48851 / CIP 106301 / E264).